A 173-amino-acid polypeptide reads, in one-letter code: Photosystem I assembly protein Ycf3 (173 aa).

3 TPR repeats span residues 35–68 (AFVY…EEDP), 72–105 (SYIL…NPRM), and 120–153 (GEKA…APNN).

The protein belongs to the Ycf3 family.

The protein resides in the cellular thylakoid membrane. Its function is as follows. Essential for the assembly of the photosystem I (PSI) complex. May act as a chaperone-like factor to guide the assembly of the PSI subunits. The chain is Photosystem I assembly protein Ycf3 from Microcystis aeruginosa (strain NIES-843 / IAM M-2473).